We begin with the raw amino-acid sequence, 133 residues long: Ribosome-binding factor A (133 aa).

Belongs to the RbfA family. Monomer. Binds 30S ribosomal subunits, but not 50S ribosomal subunits or 70S ribosomes.

It is found in the cytoplasm. In terms of biological role, one of several proteins that assist in the late maturation steps of the functional core of the 30S ribosomal subunit. Associates with free 30S ribosomal subunits (but not with 30S subunits that are part of 70S ribosomes or polysomes). Required for efficient processing of 16S rRNA. May interact with the 5'-terminal helix region of 16S rRNA. This Bordetella pertussis (strain Tohama I / ATCC BAA-589 / NCTC 13251) protein is Ribosome-binding factor A.